The following is a 228-amino-acid chain: Ribonuclease HII (228 aa).

An RNase H type-2 domain is found at 26-214; sequence RAVAGVDEVG…VRAHSRFPLD (189 aa). 3 residues coordinate a divalent metal cation: Asp-32, Glu-33, and Asp-124.

This sequence belongs to the RNase HII family. Mn(2+) is required as a cofactor. Requires Mg(2+) as cofactor.

It localises to the cytoplasm. It catalyses the reaction Endonucleolytic cleavage to 5'-phosphomonoester.. In terms of biological role, endonuclease that specifically degrades the RNA of RNA-DNA hybrids. The polypeptide is Ribonuclease HII (Solibacter usitatus (strain Ellin6076)).